A 383-amino-acid chain; its full sequence is Transcription factor Y1 (383 aa).

HTH myb-type domains follow at residues Lys9 to Leu61 and Arg62 to Ile116. 2 consecutive DNA-binding regions (H-T-H motif) follow at residues Trp37–Leu61 and Trp89–Leu112. The segment at Ser136–Pro250 is disordered. Low complexity-rich tracts occupy residues Lys155 to Thr170 and Ala191 to Pro207.

Its subcellular location is the nucleus. Its pathway is pigment biosynthesis. In terms of biological role, transcription factor involved in regulating the biosynthetic pathway of flavan-4-ol-derived red phlobaphene and red-brown 3-deoxyanthocyanidin (3-DA) pigments. Regulates transcription of chalcone synthase, chalcone isomerase, dihydroflavonol reductase and flavonoid 3'-hydroxylase genes required for the phlobaphene and 3-DA biosynthesis. Transcription of these genes is activated in mesocotyls in response to ingress of non-pathogenic fungus C.heterostrophus. Regulates the production of 3-DA phytoalexins (luteolinidin, 5-methoxyluteolinidin, apigeninidin and 7-methoxyapigeninidin) in mesocotyls in response to C.heterostrophus and corn leaf aphid (CLA) R.maidis. Involved in resistance against anthracnose leaf blight (ALB) caused by the pathogenic C.sublineolum fungus by inducing the production of 3-DA phytoalexins. Confers resistance, also by inducing the production of 3-DA phytoalexins, against CLA R.maidis, which is an insect and a pest. This Sorghum bicolor (Sorghum) protein is Transcription factor Y1.